Here is a 119-residue protein sequence, read N- to C-terminus: U-scoloptoxin(16)-Er11a (119 aa).

A signal peptide spans 1 to 19 (MKSWTAAVLSLGLIYLSIS).

It belongs to the scoloptoxin-16 family. Contains 4 disulfide bonds. In terms of tissue distribution, expressed by the venom gland.

Its subcellular location is the secreted. This chain is U-scoloptoxin(16)-Er11a, found in Ethmostigmus rubripes (Giant centipede).